A 122-amino-acid chain; its full sequence is Spermidine export protein MdtJ (122 aa).

4 consecutive transmembrane segments (helical) span residues 1-21 (MIYWIFLGLAIATEIIGTLSM), 31-51 (TGHIVMYVMITASYVMLSMAV), 54-74 (VALGVAYALWEGIGILFITLF), and 81-101 (EPISALKVLGLVTLIVGIMLV).

Belongs to the drug/metabolite transporter (DMT) superfamily. Small multidrug resistance (SMR) (TC 2.A.7.1) family. MdtJ subfamily. Forms a complex with MdtI.

The protein resides in the cell inner membrane. Functionally, catalyzes the excretion of spermidine. The protein is Spermidine export protein MdtJ of Serratia proteamaculans (strain 568).